The following is a 64-amino-acid chain: Large ribosomal subunit protein bL33 (64 aa).

This sequence belongs to the bacterial ribosomal protein bL33 family.

The chain is Large ribosomal subunit protein bL33 from Synechococcus sp. (strain JA-2-3B'a(2-13)) (Cyanobacteria bacterium Yellowstone B-Prime).